Here is a 673-residue protein sequence, read N- to C-terminus: MTNYLLEIGLEEIPAHLVTPSINQLAERMETFLKENRLEFDKIIKFSTPRRLAIIVEGLAEASEAIDEEVKGPSAKIAKDAQGNWSKAIQGFSRGQGATPDDLILKGDYYYAKKHIDGVKAEEILSKVGDEVIAKMTFSTYMKWGNNDFLFVRPIQWIVSLLEDKVVAFDLLDVTANRFSRGHRFLANVEVELKNANDYASKMPENFVLVDAEHRKAEISAQILALASENKWQVTLHKDLLEEVNNIVEYPTAFVGSFDPKYLSVPAEVLVTSMRDNQRYFEVYNQEGQLAPNFISVRNGNAENIENVVLGNEKVLVARLEDAEFFWKEDQKLKIEDLVAKLAKVTFHAKIGSITEHMARTKEIAAKLADIAGLTDEEKRDVARSAEIYKFDLLTGMVGEFDELQGVMGEKYALLAGENANVSAAIREHYMPTSAEGELPETKVGSVLAAADKIDSVLSFFNVGLIPSGSNDPYALRRAVQGLIRIIEKMNWHFDLSLFIDQFEGENHLEILDFVKARIQKLLLEKLDRHDIVEAAINSSNFDITNMMESAFVIDGHKLHEPFKPAIENVSRSINLVKKAKDIKEINPTLFEEDAEEALYNVVISLQNQWTYMPGEEKFRAIVHSLAPAIETFFESVMVMAEDLSVRDNRIALLSEVVALTSVMADFSLINTK.

The protein belongs to the class-II aminoacyl-tRNA synthetase family. In terms of assembly, tetramer of two alpha and two beta subunits.

It localises to the cytoplasm. The enzyme catalyses tRNA(Gly) + glycine + ATP = glycyl-tRNA(Gly) + AMP + diphosphate. This Lactococcus lactis subsp. lactis (strain IL1403) (Streptococcus lactis) protein is Glycine--tRNA ligase beta subunit.